The primary structure comprises 461 residues: Elongation factor 1-alpha (461 aa).

Residue glycine 2 is modified to N,N,N-trimethylglycine. The tr-type G domain maps to 5–242 (KIHINIVVIG…DAILPPSRPT (238 aa)). Positions 14 to 21 (GHVDSGKS) are G1. A GTP-binding site is contributed by 14–21 (GHVDSGKS). The interval 70–74 (GITID) is G2. Residues 91–94 (DAPG) are G3. GTP-binding positions include 153-156 (NKMD) and 194-196 (SGW). The interval 153 to 156 (NKMD) is G4. The tract at residues 194–196 (SGW) is G5. Residues glutamate 301 and glutamate 374 each carry the 5-glutamyl glycerylphosphorylethanolamine modification.

It belongs to the TRAFAC class translation factor GTPase superfamily. Classic translation factor GTPase family. EF-Tu/EF-1A subfamily.

It localises to the cytoplasm. The catalysed reaction is GTP + H2O = GDP + phosphate + H(+). In terms of biological role, translation elongation factor that catalyzes the GTP-dependent binding of aminoacyl-tRNA (aa-tRNA) to the A-site of ribosomes during the elongation phase of protein synthesis. Base pairing between the mRNA codon and the aa-tRNA anticodon promotes GTP hydrolysis, releasing the aa-tRNA from EEF1A1 and allowing its accommodation into the ribosome. The growing protein chain is subsequently transferred from the P-site peptidyl tRNA to the A-site aa-tRNA, extending it by one amino acid through ribosome-catalyzed peptide bond formation. This Oryzias latipes (Japanese rice fish) protein is Elongation factor 1-alpha (eef1a).